The chain runs to 665 residues: Beta-galactosidase LacZ (665 aa).

Arg-110 is a binding site for substrate. A Zn(2+)-binding site is contributed by Cys-114. Asn-148 is a binding site for substrate. The Proton donor role is filled by Glu-149. Zn(2+) contacts are provided by Cys-157, Cys-159, and Cys-162. Glu-303 (nucleophile) is an active-site residue. Substrate contacts are provided by residues Trp-311 and 351–354 (EKFH).

This sequence belongs to the glycosyl hydrolase 42 family.

The catalysed reaction is Hydrolysis of terminal non-reducing beta-D-galactose residues in beta-D-galactosides.. This is Beta-galactosidase LacZ from Heyndrickxia coagulans (Weizmannia coagulans).